The chain runs to 161 residues: Bacterioferritin (161 aa).

Positions 1 to 145 constitute a Ferritin-like diiron domain; sequence MKGEPKVIER…TQLDLLAKIG (145 aa). Glutamate 18 and glutamate 51 together coordinate Fe cation. Residue methionine 52 coordinates heme b. Fe cation contacts are provided by histidine 54, glutamate 94, glutamate 127, and histidine 130.

The protein belongs to the bacterioferritin family. Homooligomer of 24 subunits, arranged as 12 dimers, that are packed together to form an approximately spherical molecule with a central cavity, in which large amounts of iron can be deposited. Heme b serves as cofactor.

It catalyses the reaction 4 Fe(2+) + O2 + 4 H(+) = 4 Fe(3+) + 2 H2O. The enzyme catalyses Fe(2+)(in) = Fe(2+)(out). In terms of biological role, iron-storage protein, whose ferroxidase center binds Fe(2+), oxidizes it using dioxygen to Fe(3+), and participates in the subsequent Fe(3+) oxide mineral core formation within the central cavity of the BFR protein shell. The protein is Bacterioferritin (bfr) of Brucella melitensis biotype 1 (strain ATCC 23456 / CCUG 17765 / NCTC 10094 / 16M).